The following is a 288-amino-acid chain: 33 kDa chaperonin (288 aa).

Cystine bridges form between Cys235–Cys237 and Cys268–Cys271.

It belongs to the HSP33 family. Under oxidizing conditions two disulfide bonds are formed involving the reactive cysteines. Under reducing conditions zinc is bound to the reactive cysteines and the protein is inactive.

It is found in the cytoplasm. Its function is as follows. Redox regulated molecular chaperone. Protects both thermally unfolding and oxidatively damaged proteins from irreversible aggregation. Plays an important role in the bacterial defense system toward oxidative stress. This chain is 33 kDa chaperonin, found in Streptococcus thermophilus (strain ATCC BAA-491 / LMD-9).